We begin with the raw amino-acid sequence, 302 residues long: MASLQDIQRRISSTKKTRQITSAMQMVSTAKLSQIQRYGRGYQAYAARLEAVVEHLVAAHLFDNADAKHIPLIAQRPIRKTGILVVTSDRGLVGSYNANVIKQTNALMARLNLDTTNTAILAVGGNGADFYKKRGFEVILEHRGVSDVPSFNEIRSVVKTVTSLYESEVFDALHVVYNHFVNRLTSEYRDVQLLPLTGDTLVAMGGTEAHKAELDIQSAYEVEPDTTAVLNVVLPQFAQSLVYEAVLDAKTAEHAASSTAMKAATDNAKDLIGRLELQFNRARQAAITTEITEITGGMAALE.

This sequence belongs to the ATPase gamma chain family. F-type ATPases have 2 components, CF(1) - the catalytic core - and CF(0) - the membrane proton channel. CF(1) has five subunits: alpha(3), beta(3), gamma(1), delta(1), epsilon(1). CF(0) has three main subunits: a, b and c.

It localises to the cell membrane. In terms of biological role, produces ATP from ADP in the presence of a proton gradient across the membrane. The gamma chain is believed to be important in regulating ATPase activity and the flow of protons through the CF(0) complex. In Leuconostoc citreum (strain KM20), this protein is ATP synthase gamma chain.